A 276-amino-acid chain; its full sequence is MAD2L1-binding protein (276 aa).

Residues 1-10 (MAASGEEDMS) show a composition bias toward acidic residues. The interval 1–30 (MAASGEEDMSELSPAAAPNLDWYEKPEETH) is disordered. An interaction with MAD2L1 region spans residues 49–81 (PAEPFCPRDLVPVVFPGPVSQEDCCQFTCELLK).

The protein belongs to the MAD2L1BP family. In terms of assembly, interacts with MAD2L1.

It localises to the nucleus. The protein resides in the nucleoplasm. Its subcellular location is the cytoplasm. It is found in the cytoskeleton. The protein localises to the spindle. In terms of biological role, may function to silence the spindle checkpoint and allow mitosis to proceed through anaphase by binding MAD2L1 after it has become dissociated from the MAD2L1-CDC20 complex. The polypeptide is MAD2L1-binding protein (Mad2l1bp) (Mus musculus (Mouse)).